We begin with the raw amino-acid sequence, 294 residues long: MANLKDIKRKIGSVKNTQKTTRAMKLVSTAKLRRTEELAKRTKYFEDAINATLRQIASSIKKYKVGGIKGRYFEEPEAVAVVDIIFITADKGLCGGFNYQTIKTVRSLLEEYQSKGAKVRLRAVGKKGIEFFNFQGYELNDSVVGLSSSPNYEEAKNYILKSVGDFLEGKTDKVILIHNGYKNMITQEMKAIQLLPIDISKYTEEVDGSMLEMEPDESEKVLESLLNKYIEFNMYYALIDSLAAEHSARMQAMDAATNNAKEMVRSLTISYNKARQESITTELIEIISGMEAMK.

It belongs to the ATPase gamma chain family. In terms of assembly, F-type ATPases have 2 components, CF(1) - the catalytic core - and CF(0) - the membrane proton channel. CF(1) has five subunits: alpha(3), beta(3), gamma(1), delta(1), epsilon(1). CF(0) has three main subunits: a, b and c.

The protein localises to the cell inner membrane. Produces ATP from ADP in the presence of a proton gradient across the membrane. The gamma chain is believed to be important in regulating ATPase activity and the flow of protons through the CF(0) complex. The protein is ATP synthase gamma chain of Nitratiruptor sp. (strain SB155-2).